The sequence spans 162 residues: Precursor protein UG (162 aa).

Residues 1 to 19 form the signal peptide; that stretch reads MERILLCFIVATLVAISMA. A propeptide spanning residues 20–23 is cleaved from the precursor; the sequence is NPRP. Intrachain disulfides connect C30–C42 and C33–C49. Residues 56–59 constitute a propeptide that is removed on maturation; that stretch reads VPKP. 2 cysteine pairs are disulfide-bonded: C66–C78 and C69–C85. The propeptide occupies 92–95; the sequence is VPKP. Disulfide bonds link C102-C114 and C105-C121. A propeptide spanning residues 128–131 is cleaved from the precursor; that stretch reads VPKP. 2 cysteine pairs are disulfide-bonded: C138-C150 and C141-C157.

It belongs to the sea anemone BBH family.

The protein resides in the secreted. The protein localises to the nematocyst. Its function is as follows. Affects the ASIC3 channel (ACCN3) and produces analgesic effects. It produces a reversible inhibition effect on both the transient and the sustained current of human ASIC3 channels expressed in X.laevis oocytes. It completely blocks the transient component (IC(50)=10 uM) and partially (48%) inhibits the amplitude of the sustained component (IC(50)=1.44 uM). Using in vivo tests in mice, it reverses inflammatory and acid-induced pain. Functionally, does not affect the ASIC3 channel. Does not cause lethality or paralysis of noble crayfish (A.astacus) at a dose of 1 mg/kg. The protein is Precursor protein UG of Urticina grebelnyi (Painted anemone).